The primary structure comprises 1088 residues: DNA damage-binding protein 1b (1088 aa).

It belongs to the DDB1 family. In terms of assembly, interacts with DDA1. Binds to KTN80.2/DWA3. Interacts with HTD1.

It localises to the nucleus. It participates in protein modification; protein ubiquitination. Component of light signal transduction machinery. Involved in repression of photomorphogenesis in darkness. Plays a role in DNA repair by forming with DDB2 the UV-damaged DNA-binding protein complex (UV-DDB). The polypeptide is DNA damage-binding protein 1b (Arabidopsis thaliana (Mouse-ear cress)).